Here is a 244-residue protein sequence, read N- to C-terminus: MGRGRVELKRIENKINRQVTFSKRRNGLLKKAYELSVLCDAEVALIIFSSRGKLYEFGSAGTTKTLERYQRVCYTPQDNNMECETQSWYQEVSKLKAKYESLQRTQRHLLGEDLGPLSVKELQNLEKQLEGALAQARQRKTQMMIEQMEDLRRKERQLGDLNKQLKLKLEAEGQSLKAIQGSWNPSTATAGNSSFPVHPSQSNPMDCEPEPILQIGYHHYVPAEGPSVSKSMAGESNFIQGWVL.

An MADS-box domain is found at 1–61; it reads MGRGRVELKR…GKLYEFGSAG (61 aa). Residues 85-175 form the K-box domain; it reads TQSWYQEVSK…KLKLEAEGQS (91 aa). The disordered stretch occupies residues 180–206; sequence QGSWNPSTATAGNSSFPVHPSQSNPMD. Polar residues predominate over residues 181-204; that stretch reads GSWNPSTATAGNSSFPVHPSQSNP.

In terms of tissue distribution, expressed in flowers and seeds.

The protein localises to the nucleus. Functionally, probable transcription factor involved in flower development. In Vitis vinifera (Grape), this protein is Agamous-like MADS-box protein MADS3.